A 183-amino-acid chain; its full sequence is ATP-dependent protease subunit HslV (183 aa).

Thr13 is a catalytic residue. Residues Gly168, Cys171, and Thr174 each contribute to the Na(+) site.

It belongs to the peptidase T1B family. HslV subfamily. A double ring-shaped homohexamer of HslV is capped on each side by a ring-shaped HslU homohexamer. The assembly of the HslU/HslV complex is dependent on binding of ATP.

The protein resides in the cytoplasm. The enzyme catalyses ATP-dependent cleavage of peptide bonds with broad specificity.. Allosterically activated by HslU binding. In terms of biological role, protease subunit of a proteasome-like degradation complex believed to be a general protein degrading machinery. The polypeptide is ATP-dependent protease subunit HslV (Xanthomonas euvesicatoria pv. vesicatoria (strain 85-10) (Xanthomonas campestris pv. vesicatoria)).